The following is a 161-amino-acid chain: Cytochrome c-type biogenesis protein CcmE (161 aa).

The Cytoplasmic segment spans residues 1–8 (MNARRKKR). The chain crosses the membrane as a helical; Signal-anchor for type II membrane protein span at residues 9-29 (LTLAVALIGGVAAIASLLLYA). Topologically, residues 30–161 (LNSNLNLFYT…DYNEQQKTSY (132 aa)) are periplasmic. Residues His131 and Tyr135 each contribute to the heme site.

Belongs to the CcmE/CycJ family.

It localises to the cell inner membrane. Heme chaperone required for the biogenesis of c-type cytochromes. Transiently binds heme delivered by CcmC and transfers the heme to apo-cytochromes in a process facilitated by CcmF and CcmH. In Shewanella sediminis (strain HAW-EB3), this protein is Cytochrome c-type biogenesis protein CcmE.